Consider the following 311-residue polypeptide: MASYASEVKKELTSLEVHPEHAKAELAAFLRMNGVLNLHDHQFSLDITTENPAIARRIFKLIKVAYGIEPLLIVSRKMKLKKNNQYLVRLNQQVQEILENLQIWDTEKGLVTRIPKRIMSSREGAMSYLRGAFLAGGSVNNPETSRYHLEIYSTYEDHNEDLAKLMNEYFYLNAKMTKRRRGYIVYLKEAEKIGDFLHIVGALNAMLNFEDLRIMRDMRNSVNRLVNCDTANMKKTASASAKQVEDIQLIQKEKGLDDLSEKLQILANFRLAHPELTLKEVADQIPDGPISKSGVNHRFKKLHEIAESLRE.

The H-T-H motif DNA-binding region spans 277 to 311; it reads TLKEVADQIPDGPISKSGVNHRFKKLHEIAESLRE.

The protein belongs to the WhiA family.

Involved in cell division and chromosome segregation. This is Probable cell division protein WhiA from Lactobacillus acidophilus (strain ATCC 700396 / NCK56 / N2 / NCFM).